We begin with the raw amino-acid sequence, 210 residues long: Outer-membrane lipoprotein LolB (210 aa).

A signal peptide spans 1–29 (MSLISNNEERSLRVRYCIAIALSALLISG). Cys-30 carries N-palmitoyl cysteine lipidation. Residue Cys-30 is the site of S-diacylglycerol cysteine attachment.

The protein belongs to the LolB family. As to quaternary structure, monomer.

The protein localises to the cell outer membrane. Functionally, plays a critical role in the incorporation of lipoproteins in the outer membrane after they are released by the LolA protein. This chain is Outer-membrane lipoprotein LolB, found in Coxiella burnetii (strain CbuK_Q154) (Coxiella burnetii (strain Q154)).